A 430-amino-acid polypeptide reads, in one-letter code: Tol-Pal system protein TolB (430 aa).

Residues 1–21 (MKQALRVAFGFLMLWAAVLHA) form the signal peptide.

The protein belongs to the TolB family. The Tol-Pal system is composed of five core proteins: the inner membrane proteins TolA, TolQ and TolR, the periplasmic protein TolB and the outer membrane protein Pal. They form a network linking the inner and outer membranes and the peptidoglycan layer.

It is found in the periplasm. Part of the Tol-Pal system, which plays a role in outer membrane invagination during cell division and is important for maintaining outer membrane integrity. TolB occupies a key intermediary position in the Tol-Pal system because it communicates directly with both membrane-embedded components, Pal in the outer membrane and TolA in the inner membrane. The chain is Tol-Pal system protein TolB from Klebsiella pneumoniae (strain 342).